A 359-amino-acid polypeptide reads, in one-letter code: Cyclin puc1 (359 aa).

The protein belongs to the cyclin family.

Functionally, function in exit from the mitotic cycle. Contributes to negative regulation of the timing of sexual development in fission yeast, and functions at the transition between cycling and non-cycling cells. Interacts with protein kinase A. The chain is Cyclin puc1 (puc1) from Schizosaccharomyces pombe (strain 972 / ATCC 24843) (Fission yeast).